The primary structure comprises 94 residues: Aspartyl/glutamyl-tRNA(Asn/Gln) amidotransferase subunit C (94 aa).

Residues Pro-72–Val-94 are disordered.

The protein belongs to the GatC family. As to quaternary structure, heterotrimer of A, B and C subunits.

The enzyme catalyses L-glutamyl-tRNA(Gln) + L-glutamine + ATP + H2O = L-glutaminyl-tRNA(Gln) + L-glutamate + ADP + phosphate + H(+). The catalysed reaction is L-aspartyl-tRNA(Asn) + L-glutamine + ATP + H2O = L-asparaginyl-tRNA(Asn) + L-glutamate + ADP + phosphate + 2 H(+). Functionally, allows the formation of correctly charged Asn-tRNA(Asn) or Gln-tRNA(Gln) through the transamidation of misacylated Asp-tRNA(Asn) or Glu-tRNA(Gln) in organisms which lack either or both of asparaginyl-tRNA or glutaminyl-tRNA synthetases. The reaction takes place in the presence of glutamine and ATP through an activated phospho-Asp-tRNA(Asn) or phospho-Glu-tRNA(Gln). This Moorella thermoacetica (strain ATCC 39073 / JCM 9320) protein is Aspartyl/glutamyl-tRNA(Asn/Gln) amidotransferase subunit C.